The sequence spans 165 residues: Phosphopantetheine adenylyltransferase (165 aa).

Thr-9 is a binding site for substrate. Residues 9 to 10 and His-17 each bind ATP; that span reads TF. 3 residues coordinate substrate: Lys-41, Leu-73, and Arg-87. ATP-binding positions include 88-90, Glu-98, and 123-129; these read GLR and YQFISGT.

It belongs to the bacterial CoaD family. In terms of assembly, homohexamer. The cofactor is Mg(2+).

The protein resides in the cytoplasm. It carries out the reaction (R)-4'-phosphopantetheine + ATP + H(+) = 3'-dephospho-CoA + diphosphate. It participates in cofactor biosynthesis; coenzyme A biosynthesis; CoA from (R)-pantothenate: step 4/5. Its function is as follows. Reversibly transfers an adenylyl group from ATP to 4'-phosphopantetheine, yielding dephospho-CoA (dPCoA) and pyrophosphate. This chain is Phosphopantetheine adenylyltransferase, found in Burkholderia vietnamiensis (strain G4 / LMG 22486) (Burkholderia cepacia (strain R1808)).